A 37-amino-acid chain; its full sequence is Large ribosomal subunit protein bL36 (37 aa).

This sequence belongs to the bacterial ribosomal protein bL36 family.

The sequence is that of Large ribosomal subunit protein bL36 from Desulfotalea psychrophila (strain LSv54 / DSM 12343).